We begin with the raw amino-acid sequence, 420 residues long: MPLQVSDYSWQQTKTAVFLSLPLKGVCVRDTDVFCTENYLKVNFPPFLFEAFLYAPIDDESSKAKIGNDTIVFTLYKKEAAMWETLSVTGVDKEMMQRIREKSILQAQERAKEATEAKAAAKREDQKYALSVMMKIEEEERKKIEDMKENERIKATKELEAWKEYQRKAEEQKKIQREEKLCQKEKQIKEERKKIKYKSLTRNLASRNLAPKGRNSENIFTEKLKEDSIPAPRSVGSIKINFTPRVFPTALRESQVAEEEEWLHKQAEARRAMNTDIAELCDLKEEEKNPEWLKDKGNKLFATENYLAAINAYNLAIRLNNKMPLLYLNRAACHLKLKNLHKAIEDSSKALELLMPPVTDNANARMKAHVRRGTAFCQLELYVEGLQDYEAALKIDPSNKIVQIDAEKIRNVIQGTELKS.

The CS domain occupies Leu-3–Ser-87. The interval Asp-7 to Ser-103 is mediates interaction with ESR1 and STUB1. TPR repeat units lie at residues Pro-290–Met-323, Pro-324–Pro-357, and Met-366–Asn-399.

As to quaternary structure, interacts with ZMYND10. Interacts with STUB1. Interacts with ESR1 and ESR2. Interacts with DNAAF2. Interacts with CCT3, CCT4, CCT5 and CCT8. Interacts with DNAAF6/PIH1D3.

The protein localises to the nucleus. It is found in the cytoplasm. It localises to the cell projection. Its subcellular location is the neuron projection. The protein resides in the dynein axonemal particle. Its function is as follows. Involved in neuronal migration during development of the cerebral neocortex. May regulate the stability and proteasomal degradation of the estrogen receptors that play an important role in neuronal differentiation, survival and plasticity. Axonemal dynein assembly factor required for ciliary motility. The chain is Dynein axonemal assembly factor 4 from Pan paniscus (Pygmy chimpanzee).